The following is a 96-amino-acid chain: Small ribosomal subunit protein bS6 (96 aa).

The protein belongs to the bacterial ribosomal protein bS6 family.

Binds together with bS18 to 16S ribosomal RNA. The sequence is that of Small ribosomal subunit protein bS6 from Natranaerobius thermophilus (strain ATCC BAA-1301 / DSM 18059 / JW/NM-WN-LF).